The sequence spans 312 residues: MSGENVTKVSTFILVGLPTAPGLQYLLFLLFLLTYLFVLVENLAIILIVWSSTSLHRPMYYFLSSMSFLEIWYVSDITPKMLEGFLLQQKRISFVGCMTQLYFFSSLVCTECVLLASMAYDRYVAICHPLRYHVLVTPGLCLQLVGFSFVSGFTISMIKVCFISSVTFCGSNVLNHFFCDISPILKLACTDFSTAELVDFILAFIILVFPLLATILSYWHITLAVLRIPSATGCWRAFSTCASHLTVVTVFYTALLFMYVRPQAIDSQSSNKLISAVYTVVTPIINPLIYCLRNKEFKDALKKALGLGQTSH.

Topologically, residues 1-25 are extracellular; sequence MSGENVTKVSTFILVGLPTAPGLQY. Asn-5 carries an N-linked (GlcNAc...) asparagine glycan. Residues 26–46 form a helical membrane-spanning segment; it reads LLFLLFLLTYLFVLVENLAII. Residues 47 to 54 are Cytoplasmic-facing; sequence LIVWSSTS. The chain crosses the membrane as a helical span at residues 55 to 75; it reads LHRPMYYFLSSMSFLEIWYVS. Residues 76–99 are Extracellular-facing; sequence DITPKMLEGFLLQQKRISFVGCMT. The cysteines at positions 97 and 189 are disulfide-linked. A helical membrane pass occupies residues 100–120; it reads QLYFFSSLVCTECVLLASMAY. The Cytoplasmic segment spans residues 121 to 139; it reads DRYVAICHPLRYHVLVTPG. The helical transmembrane segment at 140-160 threads the bilayer; the sequence is LCLQLVGFSFVSGFTISMIKV. The Extracellular segment spans residues 161–196; it reads CFISSVTFCGSNVLNHFFCDISPILKLACTDFSTAE. A helical membrane pass occupies residues 197–217; the sequence is LVDFILAFIILVFPLLATILS. The Cytoplasmic segment spans residues 218–237; that stretch reads YWHITLAVLRIPSATGCWRA. The helical transmembrane segment at 238 to 258 threads the bilayer; that stretch reads FSTCASHLTVVTVFYTALLFM. Over 259–271 the chain is Extracellular; that stretch reads YVRPQAIDSQSSN. A helical membrane pass occupies residues 272–292; that stretch reads KLISAVYTVVTPIINPLIYCL. Residues 293-312 are Cytoplasmic-facing; the sequence is RNKEFKDALKKALGLGQTSH.

The protein belongs to the G-protein coupled receptor 1 family.

It is found in the cell membrane. Odorant receptor. This Homo sapiens (Human) protein is Olfactory receptor 6B2 (OR6B2).